The sequence spans 253 residues: Low affinity immunoglobulin gamma Fc region receptor III-A (253 aa).

The N-terminal stretch at 1-20 (MGQPLPPVALLLLVSASSRA) is a signal peptide. Residues 21–207 (ADVPKALVLL…ISSSVLPWHQ (187 aa)) are Extracellular-facing. 2 Ig-like C2-type domains span residues 24–90 (PKAL…YRCQ) and 99–189 (PVQL…VTIT). 2 disulfide bridges follow: Cys-47-Cys-89 and Cys-128-Cys-172. N-linked (GlcNAc...) asparagine glycans are attached at residues Asn-56, Asn-63, Asn-165, and Asn-180. The helical transmembrane segment at 208-226 (IAFCLVMGLLLAADTGLYF) threads the bilayer. The Cytoplasmic portion of the chain corresponds to 227 to 253 (SVQRDLRSSQRARKEHTLGWSLGSQDK).

Forms a heterooligomeric complex with ITAM-containing signaling subunits FCER1G. Interacts (via transmembrane domain) with signaling subunits; this interaction is a prerequisite for receptor complex expression on the cell surface and intracellular signal transduction. Binds the Fc region of antigen-complexed IgG.

It localises to the cell membrane. Its function is as follows. Receptor for the invariable Fc fragment of immunoglobulin gamma (IgG). Optimally activated upon binding of clustered antigen-IgG complexes displayed on cell surfaces, triggers lysis of antibody-coated cells, a process known as antibody-dependent cellular cytotoxicity (ADCC). Does not bind free monomeric IgG, thus avoiding inappropriate effector cell activation in the absence of antigenic trigger. Mediates IgG effector functions on natural killer (NK) cells. Binds antigen-IgG complexes generated upon infection and triggers NK cell-dependent cytokine production and degranulation to limit viral load and propagation. Fc-binding subunit that associates with FCER1G adapter to form functional signaling complexes. Following the engagement of antigen-IgG complexes, triggers phosphorylation of immunoreceptor tyrosine-based activation motif (ITAM)-containing adapters with subsequent activation of phosphatidylinositol 3-kinase signaling and sustained elevation of intracellular calcium that ultimately drive NK cell activation. Mediates enhanced ADCC in response to afucosylated IgGs. The chain is Low affinity immunoglobulin gamma Fc region receptor III-A from Oryctolagus cuniculus (Rabbit).